Reading from the N-terminus, the 48-residue chain is MKDRLFLLGQHLLPHHLLSRAAGRLAECRVPWVKNSLIKAFARHFQVD.

It belongs to the phosphatidylserine decarboxylase family. Type 1 subfamily. Requires pyruvate as cofactor.

The catalysed reaction is a 1,2-diacyl-sn-glycero-3-phospho-L-serine + H(+) = a 1,2-diacyl-sn-glycero-3-phosphoethanolamine + CO2. It functions in the pathway phospholipid metabolism; phosphatidylethanolamine biosynthesis; phosphatidylethanolamine from CDP-diacylglycerol: step 2/2. The chain is Phosphatidylserine decarboxylase proenzyme (psd) from Azotobacter vinelandii.